Consider the following 161-residue polypeptide: Nucleotide-binding protein Lferr_1091 (161 aa).

Belongs to the YajQ family.

In terms of biological role, nucleotide-binding protein. This is Nucleotide-binding protein Lferr_1091 from Acidithiobacillus ferrooxidans (strain ATCC 53993 / BNL-5-31) (Leptospirillum ferrooxidans (ATCC 53993)).